A 125-amino-acid polypeptide reads, in one-letter code: MARVKRSLNAKKKRRVVLSQAKGYRGQRSRLYRKAKEQMLHSMTYAYRDRKDRKGQFRRLWIQRINAASRAHGLTYNRFMQGLKAAGIEVDRRMLAELAVNDAAAFAALVETAKKAIPAPSESAA.

This sequence belongs to the bacterial ribosomal protein bL20 family.

In terms of biological role, binds directly to 23S ribosomal RNA and is necessary for the in vitro assembly process of the 50S ribosomal subunit. It is not involved in the protein synthesizing functions of that subunit. The chain is Large ribosomal subunit protein bL20 from Thermobifida fusca (strain YX).